The sequence spans 174 residues: Small ribosomal subunit protein uS12m (174 aa).

The protein belongs to the universal ribosomal protein uS12 family. As to quaternary structure, component of the mitochondrial small ribosomal subunit (mt-SSU). Mature N.crassa 74S mitochondrial ribosomes consist of a small (37S) and a large (54S) subunit. The 37S small subunit contains a 16S ribosomal RNA (16S mt-rRNA) and 32 different proteins. The 54S large subunit contains a 23S rRNA (23S mt-rRNA) and 42 different proteins. uS12m forms part of the decoding center of the mt-SSU.

The protein localises to the mitochondrion. Its function is as follows. Component of the mitochondrial ribosome (mitoribosome), a dedicated translation machinery responsible for the synthesis of mitochondrial genome-encoded proteins, including at least some of the essential transmembrane subunits of the mitochondrial respiratory chain. The mitoribosomes are attached to the mitochondrial inner membrane and translation products are cotranslationally integrated into the membrane. This is Small ribosomal subunit protein uS12m (mrps12) from Neurospora crassa (strain ATCC 24698 / 74-OR23-1A / CBS 708.71 / DSM 1257 / FGSC 987).